We begin with the raw amino-acid sequence, 98 residues long: Large ribosomal subunit protein uL23 (98 aa).

It belongs to the universal ribosomal protein uL23 family. In terms of assembly, part of the 50S ribosomal subunit. Contacts protein L29, and trigger factor when it is bound to the ribosome.

In terms of biological role, one of the early assembly proteins it binds 23S rRNA. One of the proteins that surrounds the polypeptide exit tunnel on the outside of the ribosome. Forms the main docking site for trigger factor binding to the ribosome. The chain is Large ribosomal subunit protein uL23 from Ruegeria sp. (strain TM1040) (Silicibacter sp.).